The following is a 233-amino-acid chain: Biosynthetic peptidoglycan transglycosylase (233 aa).

Residues Ile17 to Leu37 form a helical membrane-spanning segment.

This sequence belongs to the glycosyltransferase 51 family.

The protein localises to the cell inner membrane. The enzyme catalyses [GlcNAc-(1-&gt;4)-Mur2Ac(oyl-L-Ala-gamma-D-Glu-L-Lys-D-Ala-D-Ala)](n)-di-trans,octa-cis-undecaprenyl diphosphate + beta-D-GlcNAc-(1-&gt;4)-Mur2Ac(oyl-L-Ala-gamma-D-Glu-L-Lys-D-Ala-D-Ala)-di-trans,octa-cis-undecaprenyl diphosphate = [GlcNAc-(1-&gt;4)-Mur2Ac(oyl-L-Ala-gamma-D-Glu-L-Lys-D-Ala-D-Ala)](n+1)-di-trans,octa-cis-undecaprenyl diphosphate + di-trans,octa-cis-undecaprenyl diphosphate + H(+). It functions in the pathway cell wall biogenesis; peptidoglycan biosynthesis. Functionally, peptidoglycan polymerase that catalyzes glycan chain elongation from lipid-linked precursors. The sequence is that of Biosynthetic peptidoglycan transglycosylase from Rhizobium etli (strain ATCC 51251 / DSM 11541 / JCM 21823 / NBRC 15573 / CFN 42).